A 204-amino-acid polypeptide reads, in one-letter code: Holliday junction branch migration complex subunit RuvA (204 aa).

Residues 1-64 are domain I; that stretch reads MIGRLQGILL…EDAHLLFGFA (64 aa). Residues 65–143 are domain II; sequence QKTDRTLFRE…GVKQSDFFVE (79 aa). The interval 144–155 is flexible linker; that stretch reads STHIPLSPSIES. Residues 156–204 are domain III; it reads HSESSSDEAISALIALGYKPVEAEKMVKRVAKPELTSEQVIREALKVAL.

The protein belongs to the RuvA family. Homotetramer. Forms an RuvA(8)-RuvB(12)-Holliday junction (HJ) complex. HJ DNA is sandwiched between 2 RuvA tetramers; dsDNA enters through RuvA and exits via RuvB. An RuvB hexamer assembles on each DNA strand where it exits the tetramer. Each RuvB hexamer is contacted by two RuvA subunits (via domain III) on 2 adjacent RuvB subunits; this complex drives branch migration. In the full resolvosome a probable DNA-RuvA(4)-RuvB(12)-RuvC(2) complex forms which resolves the HJ.

Its subcellular location is the cytoplasm. Its function is as follows. The RuvA-RuvB-RuvC complex processes Holliday junction (HJ) DNA during genetic recombination and DNA repair, while the RuvA-RuvB complex plays an important role in the rescue of blocked DNA replication forks via replication fork reversal (RFR). RuvA specifically binds to HJ cruciform DNA, conferring on it an open structure. The RuvB hexamer acts as an ATP-dependent pump, pulling dsDNA into and through the RuvAB complex. HJ branch migration allows RuvC to scan DNA until it finds its consensus sequence, where it cleaves and resolves the cruciform DNA. The chain is Holliday junction branch migration complex subunit RuvA from Haemophilus influenzae (strain ATCC 51907 / DSM 11121 / KW20 / Rd).